Consider the following 213-residue polypeptide: Peptidoglycan-N-acetylglucosamine deacetylase BC_3618 (213 aa).

Residues 22-203 (KIIAITFDDG…ELKKQGYRFV (182 aa)) form the NodB homology domain. Asp-29 functions as the Proton acceptor in the catalytic mechanism. Zn(2+) contacts are provided by Asp-30, His-80, and His-84. His-175 (proton donor) is an active-site residue.

The protein belongs to the polysaccharide deacetylase family. It depends on Zn(2+) as a cofactor.

The catalysed reaction is peptidoglycan-N-acetyl-D-glucosamine + H2O = peptidoglycan-D-glucosamine + acetate.. Its activity is regulated as follows. Inhibited by CuCl(2) and ZnCl(2). Catalyzes the deacetylation of N-acetylglucosamine (GlcNAc) residues in peptidoglycan. Also acts on soluble chitin substrates and N-acetylchitooligomers. Acts on cell wall peptidoglycan from the Gram-positive bacteria B.cereus and B.subtilis and the Gram-negative bacterium H.pylori. Not active on acetylated xylan. The sequence is that of Peptidoglycan-N-acetylglucosamine deacetylase BC_3618 from Bacillus cereus (strain ATCC 14579 / DSM 31 / CCUG 7414 / JCM 2152 / NBRC 15305 / NCIMB 9373 / NCTC 2599 / NRRL B-3711).